Reading from the N-terminus, the 87-residue chain is Small ribosomal subunit protein bS20 (87 aa).

Residues 1–26 (MANIKSAKKRAVQSEKARKHNASRRS) are disordered.

This sequence belongs to the bacterial ribosomal protein bS20 family.

Binds directly to 16S ribosomal RNA. This Salmonella typhi protein is Small ribosomal subunit protein bS20.